The primary structure comprises 130 residues: Phosphoribosyl-AMP cyclohydrolase (130 aa).

Residue D77 coordinates Mg(2+). Residue C78 participates in Zn(2+) binding. D79 and D81 together coordinate Mg(2+). Residues C95 and C102 each contribute to the Zn(2+) site.

This sequence belongs to the PRA-CH family. As to quaternary structure, homodimer. It depends on Mg(2+) as a cofactor. Requires Zn(2+) as cofactor.

The protein resides in the cytoplasm. It carries out the reaction 1-(5-phospho-beta-D-ribosyl)-5'-AMP + H2O = 1-(5-phospho-beta-D-ribosyl)-5-[(5-phospho-beta-D-ribosylamino)methylideneamino]imidazole-4-carboxamide. It functions in the pathway amino-acid biosynthesis; L-histidine biosynthesis; L-histidine from 5-phospho-alpha-D-ribose 1-diphosphate: step 3/9. In terms of biological role, catalyzes the hydrolysis of the adenine ring of phosphoribosyl-AMP. The polypeptide is Phosphoribosyl-AMP cyclohydrolase (Pseudomonas entomophila (strain L48)).